Consider the following 118-residue polypeptide: ATP synthase subunit c (118 aa).

2 helical membrane-spanning segments follow: residues Ala-34–Gly-54 and Met-88–Ala-108.

The protein belongs to the ATPase C chain family. As to quaternary structure, F-type ATPases have 2 components, F(1) - the catalytic core - and F(0) - the membrane proton channel. F(1) has five subunits: alpha(3), beta(3), gamma(1), delta(1), epsilon(1). F(0) has three main subunits: a(1), b(2) and c(10-14). The alpha and beta chains form an alternating ring which encloses part of the gamma chain. F(1) is attached to F(0) by a central stalk formed by the gamma and epsilon chains, while a peripheral stalk is formed by the delta and b chains.

It localises to the cell inner membrane. In terms of biological role, f(1)F(0) ATP synthase produces ATP from ADP in the presence of a proton or sodium gradient. F-type ATPases consist of two structural domains, F(1) containing the extramembraneous catalytic core and F(0) containing the membrane proton channel, linked together by a central stalk and a peripheral stalk. During catalysis, ATP synthesis in the catalytic domain of F(1) is coupled via a rotary mechanism of the central stalk subunits to proton translocation. Key component of the F(0) channel; it plays a direct role in translocation across the membrane. A homomeric c-ring of between 10-14 subunits forms the central stalk rotor element with the F(1) delta and epsilon subunits. This chain is ATP synthase subunit c, found in Syntrophus aciditrophicus (strain SB).